The sequence spans 90 residues: MEKLFVLVFALALLAFSSDASPILTEKQAKQLLRSRRQDRPNKPGFPDEPMREYMHHLLALEHRAEEQFLEHWLNPHCKPHCDRNIVHPV.

Residues 1-20 (MEKLFVLVFALALLAFSSDA) form the signal peptide.

The protein localises to the secreted. This is an uncharacterized protein from Mus musculus (Mouse).